Here is a 250-residue protein sequence, read N- to C-terminus: MAAGTSNYWEDLRKQARQLENELDLKLVSFSKLCTSYSHSSARDGGRDRYSSDTTPLLNGSSQDRMFETMAIEIEQLLARLTGVNDKMAEYTHSAGVPSLNAALMHTLQRHRDILQDYTHEFHKTKANFMAIRERENLMGSVRKDIESYKSGSGVNNRRTELFLKEHDHLRNSDRLIEETISIAMATKENMTSQRGMLKSIHSKMNTLANRFPAVNSLIQRINLRKRRDSLILGGVIGICTILLLLYAFH.

Position 2 is an N-acetylalanine (Ala-2). Residues 2–229 (AAGTSNYWED…QRINLRKRRD (228 aa)) are Cytoplasmic-facing. Residues 9–30 (WEDLRKQARQLENELDLKLVSF) adopt a coiled-coil conformation. The interval 37–59 (YSHSSARDGGRDRYSSDTTPLLN) is disordered. Residues 41–51 (SARDGGRDRYS) are compositionally biased toward basic and acidic residues. Residues 68–95 (ETMAIEIEQLLARLTGVNDKMAEYTHSA) adopt a coiled-coil conformation. A Phosphoserine modification is found at Ser-141. A helical; Anchor for type IV membrane protein membrane pass occupies residues 230 to 250 (SLILGGVIGICTILLLLYAFH).

Belongs to the GOSR1 family. Component of several multiprotein Golgi SNARE complexes. Identified in a SNARE complex with BET1, STX5 and YKT6, in a SNARE complex with BET1L, STX5 and YKT6, in a SNARE complex with STX5, GOSR2, SEC22B and BET1, and in complex with STX5 and COG3. Interacts with GABARAPL2. Interacts with the 34 kDa STX5 isoform.

It is found in the golgi apparatus membrane. In terms of biological role, involved in transport from the ER to the Golgi apparatus as well as in intra-Golgi transport. It belongs to a super-family of proteins called t-SNAREs or soluble NSF (N-ethylmaleimide-sensitive factor) attachment protein receptor. May play a protective role against hydrogen peroxide induced cytotoxicity under glutathione depleted conditions in neuronal cells by regulating the intracellular ROS levels via inhibition of p38 MAPK (MAPK11, MAPK12, MAPK13 and MAPK14). Participates in docking and fusion stage of ER to cis-Golgi transport. Plays an important physiological role in VLDL-transport vesicle-Golgi fusion and thus in VLDL delivery to the hepatic cis-Golgi. The protein is Golgi SNAP receptor complex member 1 (Gosr1) of Rattus norvegicus (Rat).